Here is a 393-residue protein sequence, read N- to C-terminus: Formate-dependent phosphoribosylglycinamide formyltransferase (393 aa).

N(1)-(5-phospho-beta-D-ribosyl)glycinamide contacts are provided by residues Glu22–Leu23 and Glu82. Residues Arg114, Lys155, Ser160–Gln165, Glu195–Val198, and Glu203 contribute to the ATP site. The ATP-grasp domain occupies Arg119–Leu308. Glu267 and Glu279 together coordinate Mg(2+). Residues Asp286, Lys356, and Arg363 to Arg364 contribute to the N(1)-(5-phospho-beta-D-ribosyl)glycinamide site.

Belongs to the PurK/PurT family. As to quaternary structure, homodimer.

The catalysed reaction is N(1)-(5-phospho-beta-D-ribosyl)glycinamide + formate + ATP = N(2)-formyl-N(1)-(5-phospho-beta-D-ribosyl)glycinamide + ADP + phosphate + H(+). It participates in purine metabolism; IMP biosynthesis via de novo pathway; N(2)-formyl-N(1)-(5-phospho-D-ribosyl)glycinamide from N(1)-(5-phospho-D-ribosyl)glycinamide (formate route): step 1/1. In terms of biological role, involved in the de novo purine biosynthesis. Catalyzes the transfer of formate to 5-phospho-ribosyl-glycinamide (GAR), producing 5-phospho-ribosyl-N-formylglycinamide (FGAR). Formate is provided by PurU via hydrolysis of 10-formyl-tetrahydrofolate. The polypeptide is Formate-dependent phosphoribosylglycinamide formyltransferase (Histophilus somni (strain 129Pt) (Haemophilus somnus)).